A 308-amino-acid chain; its full sequence is Glutaminase 1 (308 aa).

Residues serine 64, asparagine 116, glutamate 161, asparagine 168, tyrosine 192, tyrosine 244, and valine 262 each contribute to the substrate site.

The protein belongs to the glutaminase family. Homotetramer.

It carries out the reaction L-glutamine + H2O = L-glutamate + NH4(+). This Halalkalibacterium halodurans (strain ATCC BAA-125 / DSM 18197 / FERM 7344 / JCM 9153 / C-125) (Bacillus halodurans) protein is Glutaminase 1.